A 345-amino-acid polypeptide reads, in one-letter code: Dense granule protein 4 (345 aa).

The signal sequence occupies residues 1–20 (MQGTWFSLFVVVMVSHLACG). Over residues 227–251 (SVSVSTEDSGLTGVKDSSSSESTVT) the composition is skewed to polar residues. Residues 227-271 (SVSVSTEDSGLTGVKDSSSSESTVTPADEAASESEEGDKTSRKSK) are disordered. Residues 276 to 296 (ILTGLGVAATLAAAAAAAKAV) form a helical membrane-spanning segment. The segment at 298-345 (GFGGTRTSTAPAEAGKTELDDGYRPPPFNPRPSPYAELLKDLERMRKE) is disordered. The span at 321–330 (RPPPFNPRPS) shows a compositional bias: pro residues. The span at 335–345 (LLKDLERMRKE) shows a compositional bias: basic and acidic residues.

O-glycosylated.

Its subcellular location is the secreted. The protein localises to the parasitophorous vacuole lumen. The protein resides in the parasitophorous vacuole membrane. It is found in the cytoplasmic vesicle. It localises to the secretory vesicle. Its function is as follows. Major granular component involved in excreted-secreted antigen (ESA) immunity. The protein is Dense granule protein 4 (GRA4) of Toxoplasma gondii.